The primary structure comprises 314 residues: Large ribosomal subunit protein uL10 (314 aa).

The disordered stretch occupies residues Gly285–Gly314. The segment covering Ala293 to Gly308 has biased composition (acidic residues). Position 303 is a phosphoserine; by CK1 (Ser303).

This sequence belongs to the universal ribosomal protein uL10 family. Component of the large ribosomal subunit. P0 forms a pentameric complex by interaction with dimers of P1 and P2. Phosphorylated.

Functionally, ribosomal protein P0 is the functional equivalent of E.coli protein L10. This chain is Large ribosomal subunit protein uL10, found in Podospora anserina (Pleurage anserina).